The sequence spans 256 residues: Thiazole synthase (256 aa).

Lys-98 functions as the Schiff-base intermediate with DXP in the catalytic mechanism. 1-deoxy-D-xylulose 5-phosphate-binding positions include Gly-159, 185 to 186 (AG), and 207 to 208 (NT).

The protein belongs to the ThiG family. Homotetramer. Forms heterodimers with either ThiH or ThiS.

The protein localises to the cytoplasm. It catalyses the reaction [ThiS sulfur-carrier protein]-C-terminal-Gly-aminoethanethioate + 2-iminoacetate + 1-deoxy-D-xylulose 5-phosphate = [ThiS sulfur-carrier protein]-C-terminal Gly-Gly + 2-[(2R,5Z)-2-carboxy-4-methylthiazol-5(2H)-ylidene]ethyl phosphate + 2 H2O + H(+). Its pathway is cofactor biosynthesis; thiamine diphosphate biosynthesis. Catalyzes the rearrangement of 1-deoxy-D-xylulose 5-phosphate (DXP) to produce the thiazole phosphate moiety of thiamine. Sulfur is provided by the thiocarboxylate moiety of the carrier protein ThiS. In vitro, sulfur can be provided by H(2)S. The protein is Thiazole synthase of Aliivibrio fischeri (strain ATCC 700601 / ES114) (Vibrio fischeri).